We begin with the raw amino-acid sequence, 169 residues long: Phycobiliprotein beta chain (169 aa).

At asparagine 72 the chain carries N4-methylasparagine. Cysteine 82 lines the (2R,3E)-phycocyanobilin pocket.

The protein belongs to the phycobiliprotein family. In terms of assembly, heterodimer of an alpha and a beta chain. In terms of processing, contains one covalently linked bilin chromophore.

The protein resides in the cellular thylakoid membrane. Light-harvesting photosynthetic bile pigment-protein from the phycobiliprotein complex. This is a protein functionally equivalent to, but with weaker absorbance than, allophycocyanin beta chain. The chain is Phycobiliprotein beta chain (apcD) from Mastigocladus laminosus (Fischerella sp.).